The following is a 136-amino-acid chain: Cytochrome c oxidase subunit 13, mitochondrial (136 aa).

The transit peptide at 1 to 29 directs the protein to the mitochondrion; that stretch reads MFAQRQMFFARLAANLRAPAVRQTVQRRF. Over 30 to 62 the chain is Mitochondrial matrix; that stretch reads ASTPANESGKNAFVREREAVKQHAAETTELWRK. Residues 63–83 traverse the membrane as a helical segment; sequence ISLYGIPPALALAGYNAYTLY. Over 84 to 136 the chain is Mitochondrial intermembrane; that stretch reads NEHWEHWSHLPPLEERTEYPYQNIRTRNYPWGDGDKTLFWNESVNYHNRDKVT.

Belongs to the cytochrome c oxidase subunit 6A family. In terms of assembly, component of the cytochrome c oxidase (complex IV, CIV), a multisubunit enzyme composed of 11 subunits. The complex is composed of a catalytic core of 3 subunits Cox1, Cox2 and Cox3, encoded in the mitochondrial DNA, and 8 supernumerary subunits Cox4, Cox5a/Cox5, Cox6, Cox7, Cox8, Cox7a/Cox9, Cox6b/Cox12 and Cox6a/Cox13, which are encoded in the nuclear genome. The complex exists as a monomer or a dimer and forms respiratory supercomplexes (SCs) in the inner mitochondrial membrane with NADH-ubiquinone oxidoreductase (complex I, CI) and ubiquinol-cytochrome c oxidoreductase (cytochrome b-c1 complex, complex III, CIII), resulting in various different assemblies (supercomplexes I(1)IV(1), I(1)III(3)IV(2), III(2)IV(1) and III(2)IV(2) as well as larger supercomplexes of compositions like I(1)III(2)IV(5-6)). Cox6a/Cox13 was not present in the cryo-EM structure. It may be involved in complex IV dimer formation and might not be always expressed. This would explain its absence in the map of the isolated monomer.

Its subcellular location is the mitochondrion inner membrane. It functions in the pathway energy metabolism; oxidative phosphorylation. In terms of biological role, component of the cytochrome c oxidase, the last enzyme in the mitochondrial electron transport chain which drives oxidative phosphorylation. The respiratory chain contains 3 multisubunit complexes succinate dehydrogenase (complex II, CII), ubiquinol-cytochrome c oxidoreductase (cytochrome b-c1 complex, complex III, CIII) and cytochrome c oxidase (complex IV, CIV), that cooperate to transfer electrons derived from NADH and succinate to molecular oxygen, creating an electrochemical gradient over the inner membrane that drives transmembrane transport and the ATP synthase. Cytochrome c oxidase is the component of the respiratory chain that catalyzes the reduction of oxygen to water. Electrons originating from reduced cytochrome c in the intermembrane space (IMS) are transferred via the dinuclear copper A center (CU(A)) of Cox2 and heme A of Cox1 to the active site in Cox1, a binuclear center (BNC) formed by heme A3 and copper B (CU(B)). The BNC reduces molecular oxygen to 2 water molecules using 4 electrons from cytochrome c in the IMS and 4 protons from the mitochondrial matrix. The polypeptide is Cytochrome c oxidase subunit 13, mitochondrial (eat-5) (Neurospora crassa (strain ATCC 24698 / 74-OR23-1A / CBS 708.71 / DSM 1257 / FGSC 987)).